We begin with the raw amino-acid sequence, 36 residues long: Defensin-like turtle egg white protein TEWP (36 aa).

Residue Gln-1 is modified to Pyrrolidone carboxylic acid. Intrachain disulfides connect Cys-4–Cys-30, Cys-8–Cys-29, and Cys-12–Cys-24.

This sequence belongs to the beta-defensin family. In terms of assembly, monomer. Detected in egg white (at protein level).

It is found in the secreted. In terms of biological role, antibacterial and antiviral peptide. Has strong inhibitory activity towards E.coli and S.typhimurium. Has significant antiviral activity against Chandipura virus. The polypeptide is Defensin-like turtle egg white protein TEWP (Caretta caretta (Loggerhead sea turtle)).